A 306-amino-acid polypeptide reads, in one-letter code: Leucotoxin LukEv (306 aa).

An N-terminal signal peptide occupies residues 1–23 (MLAATLSVGLIAPLASPIQESRA).

The protein belongs to the aerolysin family. Toxicity requires sequential binding and synergistic association of a class S and a class F component which form heterooligomeric complexes. LukEv (class S) associates with LukDv (class F).

It is found in the secreted. Functionally, part of a bi-component leucotoxin that acts by forming pores in the membrane of the target cells. The activity of LukEv-LukDv to rabbit leukocytes is similar to that of the Panton-Valentine leucocidin (PVL). LukEv-LukDv is hemolytic to rabbit red blood cells although the activity is only 8% of gamma-hemolysin. This is Leucotoxin LukEv (lukEv) from Staphylococcus aureus (strain NCTC 8325 / PS 47).